Reading from the N-terminus, the 502-residue chain is Cyclin-dependent kinase 19 (502 aa).

M1 is modified (N-acetylmethionine). The Protein kinase domain occupies 21–335 (EYEGCKVGRG…SEQALQDPYF (315 aa)). ATP contacts are provided by residues 27-35 (VGRGTYGHV) and K52. D151 serves as the catalytic Proton acceptor. The disordered stretch occupies residues 359 to 502 (LNEDDPEEKG…YHPSHQAHRY (144 aa)). Residues 371–392 (NQQQQQNQHQQPTAPPQQAAAP) are compositionally biased toward low complexity. Gly residues predominate over residues 408–421 (TAGGAGAGVGGTGA). A compositionally biased stretch (polar residues) spans 424 to 435 (QHSQDSSLNQVP). S449 is subject to Phosphoserine. Polar residues predominate over residues 458-467 (YQHSSSRLNY). Over residues 468–496 (QSSVQGSSQSQSTLGYSSSSQQSSQYHPS) the composition is skewed to low complexity.

It belongs to the protein kinase superfamily. CMGC Ser/Thr protein kinase family. CDC2/CDKX subfamily.

Its subcellular location is the cytoplasm. The protein localises to the perinuclear region. The protein resides in the nucleus. The catalysed reaction is L-seryl-[protein] + ATP = O-phospho-L-seryl-[protein] + ADP + H(+). It carries out the reaction L-threonyl-[protein] + ATP = O-phospho-L-threonyl-[protein] + ADP + H(+). This is Cyclin-dependent kinase 19 (CDK19) from Homo sapiens (Human).